Consider the following 469-residue polypeptide: Glutamate--tRNA ligase (469 aa).

Residues 9 to 19 carry the 'HIGH' region motif; sequence PSPTGYLHVGG. Zn(2+) contacts are provided by C98, C100, C125, and D127. The 'KMSKS' region signature appears at 237–241; that stretch reads KLSKR. K240 provides a ligand contact to ATP.

This sequence belongs to the class-I aminoacyl-tRNA synthetase family. Glutamate--tRNA ligase type 1 subfamily. In terms of assembly, monomer. It depends on Zn(2+) as a cofactor.

Its subcellular location is the cytoplasm. The enzyme catalyses tRNA(Glu) + L-glutamate + ATP = L-glutamyl-tRNA(Glu) + AMP + diphosphate. Functionally, catalyzes the attachment of glutamate to tRNA(Glu) in a two-step reaction: glutamate is first activated by ATP to form Glu-AMP and then transferred to the acceptor end of tRNA(Glu). The protein is Glutamate--tRNA ligase of Erwinia tasmaniensis (strain DSM 17950 / CFBP 7177 / CIP 109463 / NCPPB 4357 / Et1/99).